Consider the following 92-residue polypeptide: Small ribosomal subunit protein bS20 (92 aa).

The segment at Met-1–Leu-24 is disordered.

This sequence belongs to the bacterial ribosomal protein bS20 family.

In terms of biological role, binds directly to 16S ribosomal RNA. The polypeptide is Small ribosomal subunit protein bS20 (Paraburkholderia xenovorans (strain LB400)).